Here is a 1415-residue protein sequence, read N- to C-terminus: DNA-directed RNA polymerase subunit beta' (1415 aa).

The Zn(2+) site is built by C72, C74, C87, and C90. 3 residues coordinate Mg(2+): D463, D465, and D467. C811, C885, C892, and C895 together coordinate Zn(2+).

The protein belongs to the RNA polymerase beta' chain family. In terms of assembly, the RNAP catalytic core consists of 2 alpha, 1 beta, 1 beta' and 1 omega subunit. When a sigma factor is associated with the core the holoenzyme is formed, which can initiate transcription. Mg(2+) is required as a cofactor. Zn(2+) serves as cofactor.

It carries out the reaction RNA(n) + a ribonucleoside 5'-triphosphate = RNA(n+1) + diphosphate. Functionally, DNA-dependent RNA polymerase catalyzes the transcription of DNA into RNA using the four ribonucleoside triphosphates as substrates. The sequence is that of DNA-directed RNA polymerase subunit beta' from Cereibacter sphaeroides (strain ATCC 17023 / DSM 158 / JCM 6121 / CCUG 31486 / LMG 2827 / NBRC 12203 / NCIMB 8253 / ATH 2.4.1.) (Rhodobacter sphaeroides).